We begin with the raw amino-acid sequence, 75 residues long: Large ribosomal subunit protein bL31 (75 aa).

This sequence belongs to the bacterial ribosomal protein bL31 family. Type A subfamily. As to quaternary structure, part of the 50S ribosomal subunit.

In terms of biological role, binds the 23S rRNA. This Chlorobium limicola (strain DSM 245 / NBRC 103803 / 6330) protein is Large ribosomal subunit protein bL31.